The sequence spans 136 residues: Large ribosomal subunit protein uL16 (136 aa).

The protein belongs to the universal ribosomal protein uL16 family. In terms of assembly, part of the 50S ribosomal subunit.

Functionally, binds 23S rRNA and is also seen to make contacts with the A and possibly P site tRNAs. The polypeptide is Large ribosomal subunit protein uL16 (Proteus mirabilis (strain HI4320)).